The following is a 299-amino-acid chain: Sulfate adenylyltransferase subunit 2 (299 aa).

It belongs to the PAPS reductase family. CysD subfamily. Sulfate-activating enzymes, NodP and NodQ, may be physically associated.

It catalyses the reaction sulfate + ATP + H(+) = adenosine 5'-phosphosulfate + diphosphate. Functionally, proposed to provide activated sulfate for transfer to nod factor. This is Sulfate adenylyltransferase subunit 2 (nodP) from Rhizobium meliloti (strain 1021) (Ensifer meliloti).